Reading from the N-terminus, the 95-residue chain is Co-chaperonin GroES (95 aa).

The protein belongs to the GroES chaperonin family. As to quaternary structure, heptamer of 7 subunits arranged in a ring. Interacts with the chaperonin GroEL.

Its subcellular location is the cytoplasm. Functionally, together with the chaperonin GroEL, plays an essential role in assisting protein folding. The GroEL-GroES system forms a nano-cage that allows encapsulation of the non-native substrate proteins and provides a physical environment optimized to promote and accelerate protein folding. GroES binds to the apical surface of the GroEL ring, thereby capping the opening of the GroEL channel. The protein is Co-chaperonin GroES of Methylocella silvestris (strain DSM 15510 / CIP 108128 / LMG 27833 / NCIMB 13906 / BL2).